We begin with the raw amino-acid sequence, 382 residues long: F-box/kelch-repeat protein At3g16580 (382 aa).

The region spanning 9–55 (WEFSLSLPWELIEEILSRVPPESLLRFKTVSKQWNALFRDKTFINNH) is the F-box domain. 2 Kelch repeats span residues 150–196 (KIFA…NIYT) and 334–381 (WIYV…AELQ).

The sequence is that of F-box/kelch-repeat protein At3g16580 from Arabidopsis thaliana (Mouse-ear cress).